An 847-amino-acid chain; its full sequence is Ras GTPase-activating protein 2 (847 aa).

The segment covering 1-18 (MAAAAPAAAALTEAPAVP) has biased composition (low complexity). Positions 1 to 31 (MAAAAPAAAALTEAPAVPGTAEPETGDEDSR) are disordered. An N-acetylalanine modification is found at Ala-2. C2 domains follow at residues 19–137 (GTAE…ETWF) and 148–288 (VQGK…QAWY). A Ras-GAP domain is found at 371–588 (NKLVPFITAV…TDVKKFLDEI (218 aa)). Phosphoserine is present on Ser-554. Residues 603 to 704 (VHLKEGEMYK…WIDMLCRVSR (102 aa)) enclose the PH domain. A Btk-type zinc finger spans residues 706 to 742 (NHNRLSSFHPSAYLNGNWLCCQETSEGTPGCKPCTAG). His-714, Cys-725, Cys-726, and Cys-736 together coordinate Zn(2+). Positions 819–847 (DEPHEKYRKKRSSSAKYGSKENPIVGKIS) are disordered.

As to expression, widely expressed. Higher expression in brain, placenta, and kidney.

The protein localises to the cell membrane. Inhibitory regulator of the Ras-cyclic AMP pathway. May bind inositol tetrakisphosphate (IP4) and phospholipids. This chain is Ras GTPase-activating protein 2 (Rasa2), found in Rattus norvegicus (Rat).